The chain runs to 274 residues: Penicillin-insensitive murein endopeptidase (274 aa).

The signal sequence occupies residues 1-19; it reads MKKTAIALLAWFVSSASLA. 3 cysteine pairs are disulfide-bonded: Cys-44–Cys-265, Cys-187–Cys-235, and Cys-216–Cys-223. Zn(2+) is bound by residues His-110, His-113, Asp-120, Asp-147, His-150, and His-211. Residues 225–274 are disordered; sequence DQPLPPPGDGCGAELQSWFEPPKPGTTKPEKKTPPPLPPSCQALLDEHVL.

This sequence belongs to the peptidase M74 family. In terms of assembly, dimer. Requires Zn(2+) as cofactor.

It is found in the periplasm. Its function is as follows. Murein endopeptidase that cleaves the D-alanyl-meso-2,6-diamino-pimelyl amide bond that connects peptidoglycan strands. Likely plays a role in the removal of murein from the sacculus. This chain is Penicillin-insensitive murein endopeptidase, found in Salmonella choleraesuis (strain SC-B67).